Here is a 108-residue protein sequence, read N- to C-terminus: Heme oxygenase (staphylobilin-producing) 2 (108 aa).

The ABM domain maps to 2–93 (FMAENRLQLQ…DDDGQQSPIL (92 aa)). N6 is a Fe cation binding site. Residues 21–28 (RFYNRQGI) and H76 contribute to the heme site.

Belongs to the antibiotic biosynthesis monooxygenase family. Heme-degrading monooxygenase IsdG subfamily. As to quaternary structure, homodimer.

Its subcellular location is the cytoplasm. It catalyses the reaction heme b + 5 AH2 + 4 O2 + 2 H(+) = delta-staphylobilin + Fe(2+) + formaldehyde + 5 A + 4 H2O. It carries out the reaction heme b + 5 AH2 + 4 O2 + 2 H(+) = beta-staphylobilin + Fe(2+) + formaldehyde + 5 A + 4 H2O. Its function is as follows. Allows bacterial pathogens to use the host heme as an iron source. Catalyzes the oxidative degradation of the heme macrocyclic porphyrin ring to the oxo-bilirubin chromophore staphylobilin (a mixture of the linear tetrapyrroles 5-oxo-delta-bilirubin and 15-oxo-beta-bilirubin) in the presence of a suitable electron donor such as ascorbate or NADPH--cytochrome P450 reductase, with subsequent release of free iron. The chain is Heme oxygenase (staphylobilin-producing) 2 (isdI) from Staphylococcus aureus (strain MRSA252).